The chain runs to 292 residues: 4-diphosphocytidyl-2-C-methyl-D-erythritol kinase (292 aa).

Residue K20 is part of the active site. 103-113 (PMGGGIGGGSS) is an ATP binding site. Residue D145 is part of the active site.

The protein belongs to the GHMP kinase family. IspE subfamily.

It catalyses the reaction 4-CDP-2-C-methyl-D-erythritol + ATP = 4-CDP-2-C-methyl-D-erythritol 2-phosphate + ADP + H(+). The protein operates within isoprenoid biosynthesis; isopentenyl diphosphate biosynthesis via DXP pathway; isopentenyl diphosphate from 1-deoxy-D-xylulose 5-phosphate: step 3/6. In terms of biological role, catalyzes the phosphorylation of the position 2 hydroxy group of 4-diphosphocytidyl-2C-methyl-D-erythritol. This Cupriavidus necator (strain ATCC 17699 / DSM 428 / KCTC 22496 / NCIMB 10442 / H16 / Stanier 337) (Ralstonia eutropha) protein is 4-diphosphocytidyl-2-C-methyl-D-erythritol kinase.